Here is a 1584-residue protein sequence, read N- to C-terminus: Adhesion G protein-coupled receptor B1 (1584 aa).

The first 30 residues, 1-30, serve as a signal peptide directing secretion; that stretch reads MRGQAAAPGPVWILAPLLLLLLLLGRRARA. Over 31 to 948 the chain is Extracellular; it reads AAGADAGPGP…ANMEKATLPS (918 aa). Asn-64 carries an N-linked (GlcNAc...) asparagine glycan. Residues 146-167 are disordered; it reads RRQQPPQHDGLRPRAGPPGPTD. One can recognise a TSP type-1 1 domain in the interval 261-315; the sequence is TGGWKLWSLWGECTRDCGGGLQTRTRTCLPAPGVEGGGCEGVLEEGRQCNREACG. 3 disulfide bridges follow: Cys-273/Cys-309, Cys-277/Cys-314, and Cys-288/Cys-299. The tract at residues 313–335 is disordered; sequence ACGPAGRTSSRSQSLRSTDARRR. A compositionally biased stretch (low complexity) spans 319 to 329; the sequence is RTSSRSQSLRS. 4 consecutive TSP type-1 domains span residues 354-407, 409-462, 467-520, and 522-575; these read DPAA…AVCP, HGAW…ALCP, DGNW…QQCP, and DGKW…QRCP. 14 cysteine pairs are disulfide-bonded: Cys-366/Cys-400, Cys-370/Cys-406, Cys-381/Cys-390, Cys-421/Cys-456, Cys-425/Cys-461, Cys-436/Cys-446, Cys-479/Cys-514, Cys-483/Cys-519, Cys-494/Cys-504, Cys-534/Cys-569, Cys-538/Cys-574, Cys-549/Cys-559, Cys-581/Cys-616, and Cys-604/Cys-634. Residue Asn-401 is glycosylated (N-linked (GlcNAc...) asparagine). An N-linked (GlcNAc...) asparagine glycan is attached at Asn-607. The residue at position 609 (Thr-609) is a Phosphothreonine. N-linked (GlcNAc...) asparagine glycosylation is found at Asn-692, Asn-844, Asn-877, and Asn-881. Residues 760-939 form the GAIN-B domain; sequence RDAYQVTDNL…AILAQLSADA (180 aa). Disulfide bonds link Cys-884-Cys-921 and Cys-909-Cys-923. The segment at 884–939 is GPS; it reads CILWDETDVPSSSAPPQLGPWSWRGCRTVPLDALRTRCLCDRLSTFAILAQLSADA. Residues 927-943 form an N-terminal stalk following vasculostatin-120 cleavage which is not required for signaling activity region; sequence STFAILAQLSADANMEK. A helical membrane pass occupies residues 949 to 969; the sequence is VTLIVGCGVSSLTLLMLVIIY. The Cytoplasmic portion of the chain corresponds to 970 to 980; that stretch reads VSVWRYIRSER. Residues 981–1001 traverse the membrane as a helical segment; the sequence is SVILINFCLSIISSNALILIG. The Extracellular segment spans residues 1002–1008; it reads QTQTRNK. Residues 1009 to 1029 traverse the membrane as a helical segment; it reads VVCTLVAAFLHFFFLSSFCWV. Over 1030 to 1052 the chain is Cytoplasmic; that stretch reads LTEAWQSYMAVTGHLRNRLIRKR. Residues 1053-1073 form a helical membrane-spanning segment; that stretch reads FLCLGWGLPALVVAISVGFTK. The Extracellular segment spans residues 1074–1093; sequence AKGYSTMNYCWLSLEGGLLY. A helical membrane pass occupies residues 1094-1114; the sequence is AFVGPAAAVVLVNMVIGILVF. Topologically, residues 1115 to 1136 are cytoplasmic; sequence NKLVSKDGITDKKLKERAGASL. Residues 1137–1157 traverse the membrane as a helical segment; sequence WSSCVVLPLLALTWMSAVLAV. Topologically, residues 1158–1166 are extracellular; it reads TDRRSALFQ. A helical transmembrane segment spans residues 1167-1187; that stretch reads ILFAVFDSLEGFVIVMVHCIL. The Cytoplasmic portion of the chain corresponds to 1188 to 1584; it reads RREVQDAVKC…QDIIDLQTEV (397 aa). Positions 1365–1584 are involved in interaction with MAGI1; it reads YSIHIDQMPQ…QDIIDLQTEV (220 aa). Disordered regions lie at residues 1385 to 1475 and 1501 to 1548; these read EASL…RRKS and RKLQ…KKEL. The span at 1391-1439 shows a compositional bias: pro residues; sequence RSPPSRQPPSGGPPEAPPAQPPPPPPPPPPPPQQPLPPPPNLEPAPPSL. A compositionally biased stretch (polar residues) spans 1453 to 1469; it reads TGPSTKNENVATLSVSS. The residue at position 1469 (Ser-1469) is a Phosphoserine. Residues 1501-1522 are compositionally biased toward basic and acidic residues; sequence RKLQHAAEKDKEVLGPDSKPEK. The tract at residues 1581–1584 is indispensable for interaction with MAGI1; it reads QTEV.

It belongs to the G-protein coupled receptor 2 family. LN-TM7 subfamily. As to quaternary structure, interacts with ELMO1 and DOCK. When bound to ELMO1 and DOCK1, acts as a module to promote apoptotic cell engulfment. Interacts with MDM2; the interaction results in inhibition of MDM2-mediated ubiquitination and degradation of DLG4/PSD95. Interacts with PARD3 and TIAM1; the interaction is required for correct dendritic. localization of PARD3 and TIAM1 and for dendritic spine formation. Interacts with MAGI1. Interacts with MAGI3. Interacts with BAIAP2. Interacts with PHYHIP. Interacts with DLG4 (via PDZ domain). Vasculostatin-120: Interacts with CD36. Vasculostatin-120: Interacts with ARRB2. Interacts with BAIAP3; this interaction is direct. Proteolytically cleaved to produce vasculostatin-40 and vasculostatin-120. Vasculostatin-40 is the major form and is produced through proteolytic cleavage by MMP14 between residues 321 and 329 with cleavage likely to be between Ser-326 and Leu-327. Post-translationally, ubiquitinated. As to expression, expressed in brain (at protein level). Expressed on mononuclear phagocytes and monocyte-derived macrophages in the gastric mucosa (at protein level). Expressed in normal pancreatic tissue but not in pancreatic tumor tissue. Reduced or no expression is observed in some glioblastomas.

The protein resides in the cell membrane. It is found in the cell projection. It localises to the phagocytic cup. The protein localises to the cell junction. Its subcellular location is the focal adhesion. The protein resides in the dendritic spine. It is found in the postsynaptic density. It localises to the secreted. In terms of biological role, phosphatidylserine receptor which enhances the engulfment of apoptotic cells. Also mediates the binding and engulfment of Gram-negative bacteria. Stimulates production of reactive oxygen species by macrophages in response to Gram-negative bacteria, resulting in enhanced microbicidal macrophage activity. In the gastric mucosa, required for recognition and engulfment of apoptotic gastric epithelial cells. Promotes myoblast fusion. Activates the Rho pathway in a G-protein-dependent manner. Inhibits MDM2-mediated ubiquitination and degradation of DLG4/PSD95, promoting DLG4 stability and regulating synaptic plasticity. Required for the formation of dendritic spines by ensuring the correct localization of PARD3 and TIAM1. Potent inhibitor of angiogenesis in brain and may play a significant role as a mediator of the p53/TP53 signal in suppression of glioblastoma. Inhibits angiogenesis in a CD36-dependent manner. Functionally, inhibits angiogenesis. The sequence is that of Adhesion G protein-coupled receptor B1 from Homo sapiens (Human).